Reading from the N-terminus, the 464-residue chain is Probable glycine dehydrogenase (decarboxylating) subunit 1 (464 aa).

Belongs to the GcvP family. N-terminal subunit subfamily. The glycine cleavage system is composed of four proteins: P, T, L and H. In this organism, the P 'protein' is a heterodimer of two subunits.

It carries out the reaction N(6)-[(R)-lipoyl]-L-lysyl-[glycine-cleavage complex H protein] + glycine + H(+) = N(6)-[(R)-S(8)-aminomethyldihydrolipoyl]-L-lysyl-[glycine-cleavage complex H protein] + CO2. The glycine cleavage system catalyzes the degradation of glycine. The P protein binds the alpha-amino group of glycine through its pyridoxal phosphate cofactor; CO(2) is released and the remaining methylamine moiety is then transferred to the lipoamide cofactor of the H protein. The polypeptide is Probable glycine dehydrogenase (decarboxylating) subunit 1 (Thiobacillus denitrificans (strain ATCC 25259 / T1)).